A 311-amino-acid chain; its full sequence is Aspartate carbamoyltransferase catalytic subunit (311 aa).

2 residues coordinate carbamoyl phosphate: arginine 55 and threonine 56. Position 85 (lysine 85) interacts with L-aspartate. Carbamoyl phosphate contacts are provided by arginine 106, histidine 135, and glutamine 138. 2 residues coordinate L-aspartate: arginine 168 and arginine 230. 2 residues coordinate carbamoyl phosphate: leucine 268 and proline 269.

It belongs to the aspartate/ornithine carbamoyltransferase superfamily. ATCase family. In terms of assembly, heterododecamer (2C3:3R2) of six catalytic PyrB chains organized as two trimers (C3), and six regulatory PyrI chains organized as three dimers (R2).

The enzyme catalyses carbamoyl phosphate + L-aspartate = N-carbamoyl-L-aspartate + phosphate + H(+). Its pathway is pyrimidine metabolism; UMP biosynthesis via de novo pathway; (S)-dihydroorotate from bicarbonate: step 2/3. Functionally, catalyzes the condensation of carbamoyl phosphate and aspartate to form carbamoyl aspartate and inorganic phosphate, the committed step in the de novo pyrimidine nucleotide biosynthesis pathway. This chain is Aspartate carbamoyltransferase catalytic subunit, found in Proteus mirabilis (strain HI4320).